The following is a 72-amino-acid chain: MKCYLVVVVAALCTLVAQGSVGAPIPKPNPIEDIYASQLPDPGTTAQMAAGDSAYPLTLLASFDPNDTSALH.

The first 22 residues, 1-22 (MKCYLVVVVAALCTLVAQGSVG), serve as a signal peptide directing secretion. N-linked (GlcNAc...) asparagine glycosylation is present at asparagine 66.

The protein belongs to the lep1 family. In terms of assembly, interacts at the cell wall with secreted rep1 repellent peptides.

The protein resides in the secreted. The protein localises to the cell wall. In terms of biological role, core effector contributing to spore formation and tumor formation at the host plant. Modulates surface hydrophobicity promoting cell-cell or cell-surface contacts. Lep1 and rep1 interact in aerial hyphae to form a strong hydrophobic layer. Plays a crucial role in hyphal aggregation that might be a prerequisite for strong proliferation of diploid cells and for induction of the morphological changes associated with spore formation. In Sporisorium reilianum (strain SRZ2) (Maize head smut fungus), this protein is Late effector protein 1.